A 183-amino-acid polypeptide reads, in one-letter code: Capsid protein (183 aa).

The disordered stretch occupies residues 150 to 183; that stretch reads RQRGRTIRRRTPSPRRRRSQSPRRRRSQSRESQC. The span at 151–176 shows a compositional bias: basic residues; the sequence is QRGRTIRRRTPSPRRRRSQSPRRRRS. The Bipartite nuclear localization signal signature appears at 158-175; sequence RRTPSPRRRRSQSPRRRR. Residues serine 162 and serine 170 each carry the phosphoserine; by host modification. 2 consecutive repeat copies span residues 162–169 and 170–177. The tract at residues 162-177 is 2 X 8 AA repeats of S-P-R-R-R-[PR]-S-Q; sequence SPRRRRSQSPRRRRSQ. The segment at 177–183 is RNA binding; sequence QSRESQC.

This sequence belongs to the orthohepadnavirus core antigen family. Homodimerizes, then multimerizes. Interacts with cytosol exposed regions of viral L glycoprotein present in the reticulum-to-Golgi compartment. Interacts with human FLNB. Phosphorylated form interacts with host importin alpha; this interaction depends on the exposure of the NLS, which itself depends upon genome maturation and/or phosphorylation of the capsid protein. Interacts with host NUP153. In terms of processing, phosphorylated by host SRPK1, SRPK2, and maybe protein kinase C or GAPDH. Phosphorylation is critical for pregenomic RNA packaging. Protein kinase C phosphorylation is stimulated by HBx protein and may play a role in transport of the viral genome to the nucleus at the late step during the viral replication cycle.

Its subcellular location is the virion. The protein resides in the host cytoplasm. In terms of biological role, self assembles to form an icosahedral capsid. Most capsids appear to be large particles with an icosahedral symmetry of T=4 and consist of 240 copies of capsid protein, though a fraction forms smaller T=3 particles consisting of 180 capsid proteins. Entering capsids are transported along microtubules to the nucleus. Phosphorylation of the capsid is thought to induce exposure of nuclear localization signal in the C-terminal portion of the capsid protein that allows binding to the nuclear pore complex via the importin (karyopherin-) alpha and beta. Capsids are imported in intact form through the nuclear pore into the nuclear basket, where it probably binds NUP153. Only capsids that contain the mature viral genome can release the viral DNA and capsid protein into the nucleoplasm. Immature capsids get stuck in the basket. Capsids encapsulate the pre-genomic RNA and the P protein. Pre-genomic RNA is reverse-transcribed into DNA while the capsid is still in the cytoplasm. The capsid can then either be directed to the nucleus, providing more genomes for transcription, or bud through the endoplasmic reticulum to provide new virions. The sequence is that of Capsid protein from Homo sapiens (Human).